Here is a 272-residue protein sequence, read N- to C-terminus: MKSTAKMIQRHPFHLVDPSPWPLVAALGGLSLTFGGVLFMHNYEGGGELLCLGFFTILYVMFTWWRDVIREALFEGQHTLAVQQGLRMGMILFIVSEIMFFFAFFWAFFTSSISPVFNIGGVWPPTDVVAISPWGLPFLNTILLLSSGASVTWAHHAIVGGLKKEAMQGLSVTLAFAIAFTAMQGFEYSGAPFGMSDGVYGSVFYMATGFHGFHVIIGTIFLFICTIRLYLSHFSCQHHFGFEAAAWYWHFVDVVWLFLFLTIYWWGFNITV.

7 consecutive transmembrane segments (helical) span residues 20-40 (PWPLVAALGGLSLTFGGVLFM), 45-65 (GGGELLCLGFFTILYVMFTWW), 89-109 (GMILFIVSEIMFFFAFFWAFF), 128-148 (VVAISPWGLPFLNTILLLSSG), 166-186 (AMQGLSVTLAFAIAFTAMQGF), 204-224 (FYMATGFHGFHVIIGTIFLFI), and 248-268 (YWHFVDVVWLFLFLTIYWWGF).

This sequence belongs to the cytochrome c oxidase subunit 3 family. As to quaternary structure, component of the cytochrome c oxidase (complex IV, CIV), a multisubunit enzyme composed of a catalytic core of 3 subunits and several supernumerary subunits. The complex exists as a monomer or a dimer and forms supercomplexes (SCs) in the inner mitochondrial membrane with ubiquinol-cytochrome c oxidoreductase (cytochrome b-c1 complex, complex III, CIII).

It is found in the mitochondrion inner membrane. The catalysed reaction is 4 Fe(II)-[cytochrome c] + O2 + 8 H(+)(in) = 4 Fe(III)-[cytochrome c] + 2 H2O + 4 H(+)(out). In terms of biological role, component of the cytochrome c oxidase, the last enzyme in the mitochondrial electron transport chain which drives oxidative phosphorylation. The respiratory chain contains 3 multisubunit complexes succinate dehydrogenase (complex II, CII), ubiquinol-cytochrome c oxidoreductase (cytochrome b-c1 complex, complex III, CIII) and cytochrome c oxidase (complex IV, CIV), that cooperate to transfer electrons derived from NADH and succinate to molecular oxygen, creating an electrochemical gradient over the inner membrane that drives transmembrane transport and the ATP synthase. Cytochrome c oxidase is the component of the respiratory chain that catalyzes the reduction of oxygen to water. Electrons originating from reduced cytochrome c in the intermembrane space (IMS) are transferred via the dinuclear copper A center (CU(A)) of subunit 2 and heme A of subunit 1 to the active site in subunit 1, a binuclear center (BNC) formed by heme A3 and copper B (CU(B)). The BNC reduces molecular oxygen to 2 water molecules using 4 electrons from cytochrome c in the IMS and 4 protons from the mitochondrial matrix. The chain is Cytochrome c oxidase subunit 3 (COX3) from Pylaiella littoralis (Seaweed).